A 512-amino-acid polypeptide reads, in one-letter code: MTDQLIIFDTTLRDGEQSPGASMTRDEKMRIAKQLERLKVDVIEAGFPASSNGDFEAVKAIADIIKESTVCGLSRANDRDISRAAEALKGAARGRIHTFIATSPLHMEKKLRMSPDEVHEQAKLAVRFARNLVSDVEFSPEDGYRSDPDFLCRVLETVINEGATTINVPDTVGYAIPELYGNFIKMLRERVPNSDKAIWSVHCHNDLGMAVANSLAGVKIGGARQVECTINGLGERAGNCSLEEVVMAVKTRRDYFGLDLNIDTTHIVAASRMVSQTTGFVVQPNKAVVGANAFAHASGIHQDGVLKARDTYEIMRAEDVGWAANKIVLGKLSGRNAFKQRLQELGVTMASEADINAAFLRFKELADRKSEIFDEDILALVSAEEHSNVDEQFAFVSLSQHSETGERPQAKVVFTVQGKEVTGESDGNGPVDASLKAIESHVKSGAEMVLYSVNAISGSTESQGEVTVRLQNAGRVVNGVGADPDIVVASAKAYLSALNKLQSQAEKVAAQG.

One can recognise a Pyruvate carboxyltransferase domain in the interval 5-268 (LIIFDTTLRD…DLNIDTTHIV (264 aa)). 4 residues coordinate Mn(2+): D14, H202, H204, and N239. The tract at residues 394–512 (AFVSLSQHSE…SQAEKVAAQG (119 aa)) is regulatory domain.

The protein belongs to the alpha-IPM synthase/homocitrate synthase family. LeuA type 1 subfamily. In terms of assembly, homodimer. Requires Mn(2+) as cofactor.

It is found in the cytoplasm. The enzyme catalyses 3-methyl-2-oxobutanoate + acetyl-CoA + H2O = (2S)-2-isopropylmalate + CoA + H(+). It functions in the pathway amino-acid biosynthesis; L-leucine biosynthesis; L-leucine from 3-methyl-2-oxobutanoate: step 1/4. Its function is as follows. Catalyzes the condensation of the acetyl group of acetyl-CoA with 3-methyl-2-oxobutanoate (2-ketoisovalerate) to form 3-carboxy-3-hydroxy-4-methylpentanoate (2-isopropylmalate). This is 2-isopropylmalate synthase from Variovorax paradoxus (strain S110).